The following is an 86-amino-acid chain: DNA-directed RNA polymerase subunit omega (86 aa).

Over residues 67–76 (SAREHAKESQ) the composition is skewed to basic and acidic residues. The segment at 67-86 (SAREHAKESQVSEEEVREES) is disordered. Residues 77-86 (VSEEEVREES) show a composition bias toward acidic residues.

Belongs to the RNA polymerase subunit omega family. The RNAP catalytic core consists of 2 alpha, 1 beta, 1 beta' and 1 omega subunit. When a sigma factor is associated with the core the holoenzyme is formed, which can initiate transcription.

It catalyses the reaction RNA(n) + a ribonucleoside 5'-triphosphate = RNA(n+1) + diphosphate. Its function is as follows. Promotes RNA polymerase assembly. Latches the N- and C-terminal regions of the beta' subunit thereby facilitating its interaction with the beta and alpha subunits. The polypeptide is DNA-directed RNA polymerase subunit omega (Nitrosococcus oceani (strain ATCC 19707 / BCRC 17464 / JCM 30415 / NCIMB 11848 / C-107)).